Reading from the N-terminus, the 64-residue chain is Large ribosomal subunit protein bL35 (64 aa).

The interval 22 to 44 (IMKQQAGMRHNLEVKSSKRKARL) is disordered.

Belongs to the bacterial ribosomal protein bL35 family.

This is Large ribosomal subunit protein bL35 from Clavibacter sepedonicus (Clavibacter michiganensis subsp. sepedonicus).